A 68-amino-acid polypeptide reads, in one-letter code: DNA-directed RNA polymerase subunit omega (68 aa).

The protein belongs to the RNA polymerase subunit omega family. As to quaternary structure, the RNAP catalytic core consists of 2 alpha, 1 beta, 1 beta' and 1 omega subunit. When a sigma factor is associated with the core the holoenzyme is formed, which can initiate transcription.

The enzyme catalyses RNA(n) + a ribonucleoside 5'-triphosphate = RNA(n+1) + diphosphate. Promotes RNA polymerase assembly. Latches the N- and C-terminal regions of the beta' subunit thereby facilitating its interaction with the beta and alpha subunits. This Neisseria gonorrhoeae (strain NCCP11945) protein is DNA-directed RNA polymerase subunit omega.